The sequence spans 240 residues: MQLIPAIDLRDGRCVRLVQGDFEQTTVYGDDPVAVAQQWEAAGAARIHIVDLDGAKAGRPTQTSTIAAITKAVSVPVQLGGGLRDAASIAAAFELGVSDVILGTVAVRNPELVAELVRQYGKAITIGIDARNGVVATEGWLASSRQRATELAEQMGQLGVARIIYTDISRDGTLSEPNYAQTAALVTPNGPAIIASGGIARVEHLARLAELGISGAIIGTALYTGHIDLASAIQTIEHGG.

Residue D8 is the Proton acceptor of the active site. D129 serves as the catalytic Proton donor.

It belongs to the HisA/HisF family.

Its subcellular location is the cytoplasm. It catalyses the reaction 1-(5-phospho-beta-D-ribosyl)-5-[(5-phospho-beta-D-ribosylamino)methylideneamino]imidazole-4-carboxamide = 5-[(5-phospho-1-deoxy-D-ribulos-1-ylimino)methylamino]-1-(5-phospho-beta-D-ribosyl)imidazole-4-carboxamide. It participates in amino-acid biosynthesis; L-histidine biosynthesis; L-histidine from 5-phospho-alpha-D-ribose 1-diphosphate: step 4/9. The protein is 1-(5-phosphoribosyl)-5-[(5-phosphoribosylamino)methylideneamino] imidazole-4-carboxamide isomerase of Herpetosiphon aurantiacus (strain ATCC 23779 / DSM 785 / 114-95).